The following is a 189-amino-acid chain: Large ribosomal subunit protein bL9 (189 aa).

It belongs to the bacterial ribosomal protein bL9 family.

In terms of biological role, binds to the 23S rRNA. This Cereibacter sphaeroides (strain ATCC 17023 / DSM 158 / JCM 6121 / CCUG 31486 / LMG 2827 / NBRC 12203 / NCIMB 8253 / ATH 2.4.1.) (Rhodobacter sphaeroides) protein is Large ribosomal subunit protein bL9.